A 238-amino-acid chain; its full sequence is uncharacterized protein (238 aa).

This is an uncharacterized protein from Rickettsia prowazekii (strain Madrid E).